The sequence spans 445 residues: tRNA-2-methylthio-N(6)-dimethylallyladenosine synthase (445 aa).

The 122-residue stretch at 3–124 (KKLYIKTYGC…LPELISKVVR (122 aa)) folds into the MTTase N-terminal domain. [4Fe-4S] cluster contacts are provided by Cys-12, Cys-48, Cys-87, Cys-162, Cys-166, and Cys-169. The 233-residue stretch at 148 to 380 (YTQGASSFIS…QKELATQQLA (233 aa)) folds into the Radical SAM core domain. In terms of domain architecture, TRAM spans 383-445 (ESCVGSTMKV…ALNSLTGEIL (63 aa)).

It belongs to the methylthiotransferase family. MiaB subfamily. As to quaternary structure, monomer. [4Fe-4S] cluster is required as a cofactor.

It localises to the cytoplasm. It carries out the reaction N(6)-dimethylallyladenosine(37) in tRNA + (sulfur carrier)-SH + AH2 + 2 S-adenosyl-L-methionine = 2-methylsulfanyl-N(6)-dimethylallyladenosine(37) in tRNA + (sulfur carrier)-H + 5'-deoxyadenosine + L-methionine + A + S-adenosyl-L-homocysteine + 2 H(+). In terms of biological role, catalyzes the methylthiolation of N6-(dimethylallyl)adenosine (i(6)A), leading to the formation of 2-methylthio-N6-(dimethylallyl)adenosine (ms(2)i(6)A) at position 37 in tRNAs that read codons beginning with uridine. This chain is tRNA-2-methylthio-N(6)-dimethylallyladenosine synthase, found in Rickettsia typhi (strain ATCC VR-144 / Wilmington).